The chain runs to 202 residues: Recombination protein RecR (202 aa).

The C4-type zinc finger occupies C61 to C76. A Toprim domain is found at G84 to P179.

The protein belongs to the RecR family.

In terms of biological role, may play a role in DNA repair. It seems to be involved in an RecBC-independent recombinational process of DNA repair. It may act with RecF and RecO. This Bordetella pertussis (strain Tohama I / ATCC BAA-589 / NCTC 13251) protein is Recombination protein RecR.